Consider the following 85-residue polypeptide: Putative sodium channel toxin Ts34 (85 aa).

An N-terminal signal peptide occupies residues 1–17 (MNLPLLLLITILIEIHA). One can recognise an LCN-type CS-alpha/beta domain in the interval 19-82 (KDGYVIYKNS…IYGETGSYCW (64 aa)). Intrachain disulfides connect C30/C81, C34/C57, C43/C62, and C47/C64.

It belongs to the long (4 C-C) scorpion toxin superfamily. Sodium channel inhibitor family. As to expression, expressed by the venom gland.

It localises to the secreted. Functionally, putative sodium channel toxin. This is Putative sodium channel toxin Ts34 from Tityus serrulatus (Brazilian scorpion).